The following is a 582-amino-acid chain: ATP-dependent lipid A-core flippase (582 aa).

Helical transmembrane passes span 16–36 (LWPM…ALII), 63–83 (VLLW…ASGF), 153–173 (IIGL…ILIV), 253–273 (PIIQ…ASFP), and 275–295 (VMET…IALM). The ABC transmembrane type-1 domain occupies 28–310 (AVAAIALIIN…LTNVNAQFQR (283 aa)). The ABC transporter domain maps to 342–578 (LEFRQVNFAY…NGAYAQLHRM (237 aa)). 376–383 (GRSGSGKS) contacts ATP.

It belongs to the ABC transporter superfamily. Lipid exporter (TC 3.A.1.106) family. In terms of assembly, homodimer.

The protein resides in the cell inner membrane. The enzyme catalyses ATP + H2O + lipid A-core oligosaccharideSide 1 = ADP + phosphate + lipid A-core oligosaccharideSide 2.. Functionally, involved in lipopolysaccharide (LPS) biosynthesis. Translocates lipid A-core from the inner to the outer leaflet of the inner membrane. Transmembrane domains (TMD) form a pore in the inner membrane and the ATP-binding domain (NBD) is responsible for energy generation. The sequence is that of ATP-dependent lipid A-core flippase from Pectobacterium atrosepticum (strain SCRI 1043 / ATCC BAA-672) (Erwinia carotovora subsp. atroseptica).